The primary structure comprises 326 residues: DNA-directed RNA polymerase subunit alpha (326 aa).

Positions 1 to 231 are alpha N-terminal domain (alpha-NTD); sequence MQTALLKPKI…DQLSVFAALE (231 aa). The tract at residues 247 to 326 is alpha C-terminal domain (alpha-CTD); it reads IDPILLRPVD…ENWPPAGLEK (80 aa).

The protein belongs to the RNA polymerase alpha chain family. In terms of assembly, homodimer. The RNAP catalytic core consists of 2 alpha, 1 beta, 1 beta' and 1 omega subunit. When a sigma factor is associated with the core the holoenzyme is formed, which can initiate transcription.

The catalysed reaction is RNA(n) + a ribonucleoside 5'-triphosphate = RNA(n+1) + diphosphate. In terms of biological role, DNA-dependent RNA polymerase catalyzes the transcription of DNA into RNA using the four ribonucleoside triphosphates as substrates. The protein is DNA-directed RNA polymerase subunit alpha of Ralstonia nicotianae (strain ATCC BAA-1114 / GMI1000) (Ralstonia solanacearum).